The primary structure comprises 2326 residues: Telomere-associated protein RIF1 (2326 aa).

Disordered regions lie at residues Gln381–Thr410, Tyr1105–Pro1965, and Val1993–Leu2050. Positions Gly382–Pro396 are enriched in polar residues. 2 stretches are compositionally biased toward basic and acidic residues: residues Ser1112 to Lys1126 and Cys1150 to Arg1182. Positions Ser1216–Ser1225 are enriched in low complexity. Composition is skewed to polar residues over residues Gln1233–Ile1242 and Ser1252–Ala1270. The span at Lys1290–Ser1299 shows a compositional bias: basic and acidic residues. Composition is skewed to polar residues over residues Met1318–Ser1332 and Ser1341–Ser1353. Positions Pro1376 to Thr1402 are enriched in basic and acidic residues. The segment covering Pro1403–Gln1412 has biased composition (polar residues). 3 stretches are compositionally biased toward basic and acidic residues: residues Gln1448–Gln1480, Ala1489–Ser1511, and Gly1519–Ser1539. Residues Ser1564–Glu1573 are compositionally biased toward polar residues. Residues Ser1586–Lys1595 show a composition bias toward basic residues. The span at Asn1596–Gln1609 shows a compositional bias: basic and acidic residues. 2 stretches are compositionally biased toward polar residues: residues Pro1610–Ser1640 and Arg1671–Gln1683. Basic and acidic residues predominate over residues Arg1697–Glu1712. Residues Lys1713–Asp1745 show a composition bias toward polar residues. Residues Ser1776 to Ile1785 show a composition bias toward basic and acidic residues. The span at Ala1795 to Ile1813 shows a compositional bias: polar residues. Composition is skewed to basic and acidic residues over residues Val1869–Glu1884, Ser1908–Met1925, and Asp1932–Ala1954. Over residues Ser2009–Ile2036 the composition is skewed to polar residues.

This sequence belongs to the RIF1 family. As to quaternary structure, interacts with TP53BP1 (when phosphorylated by ATM).

The protein resides in the nucleus. It is found in the chromosome. The protein localises to the telomere. It localises to the cytoplasm. Its subcellular location is the cytoskeleton. The protein resides in the spindle. Functionally, key regulator of TP53BP1 that plays a key role in the repair of double-strand DNA breaks (DSBs) in response to DNA damage: acts by promoting non-homologous end joining (NHEJ)-mediated repair of DSBs. In response to DNA damage, interacts with ATM-phosphorylated TP53BP1, allowing recruitment to DNA DSBs. Once recruited to DSBs, RIF1 and TP53BP1 act by promoting NHEJ-mediated repair of DSBs. In the same time, RIF1 and TP53BP1 specifically counteract DSBs resection via homologous recombination (HR) during G1 phase. The chain is Telomere-associated protein RIF1 from Gallus gallus (Chicken).